Consider the following 654-residue polypeptide: Probable Xaa-Pro aminopeptidase P (654 aa).

Residues aspartate 449, aspartate 460, glutamate 558, and glutamate 572 each contribute to the Mn(2+) site.

This sequence belongs to the peptidase M24B family. Mn(2+) is required as a cofactor.

It catalyses the reaction Release of any N-terminal amino acid, including proline, that is linked to proline, even from a dipeptide or tripeptide.. Functionally, catalyzes the removal of a penultimate prolyl residue from the N-termini of peptides. In Aspergillus flavus (strain ATCC 200026 / FGSC A1120 / IAM 13836 / NRRL 3357 / JCM 12722 / SRRC 167), this protein is Probable Xaa-Pro aminopeptidase P (ampp).